The chain runs to 163 residues: Extracellular giant hemoglobin major globin subunit B2 (163 aa).

Residues 1–16 form the signal peptide; it reads MIALFVLMGLMAAASA. The region spanning 19 to 163 is the Globin domain; that stretch reads CCSSEDRANV…RIANGISAGL (145 aa). Cysteines 20 and 151 form a disulfide. Cys83 contributes to the hydrogen sulfide binding site. Position 114 (His114) interacts with heme b.

Belongs to the globin family. The 400 kDa hemoglobin consists of a spherical 24-mer arranged as a double layer of dome-shaped dodecamers. Each dodecamer is composed of the 3-fold trimer of the tetramer A1-A2-B1-B2 having one intra-tetramer (A1-B2) disulfide bond and one inter-tetramer (B1-B2) disulfide bond per tetramer.

It localises to the secreted. In terms of biological role, the extracellular giant hemoglobin is able to bind and transport oxygen and hydrosulfide simultaneously and reversibly at two different sites. In Oligobrachia mashikoi (Beard worm), this protein is Extracellular giant hemoglobin major globin subunit B2 (ghbB2).